Reading from the N-terminus, the 356-residue chain is Probable arabinogalactan endo-beta-1,4-galactanase A (356 aa).

Residues 1–21 form the signal peptide; that stretch reads MLGKTVLLPLLVLLCHSLASA. Asn-133 carries N-linked (GlcNAc...) asparagine glycosylation. Residue Glu-157 is the Proton donor of the active site. Glu-268 (nucleophile) is an active-site residue.

It belongs to the glycosyl hydrolase 53 family.

The protein resides in the secreted. The enzyme catalyses The enzyme specifically hydrolyzes (1-&gt;4)-beta-D-galactosidic linkages in type I arabinogalactans.. Functionally, endogalactanase involved in the degradation of plant cell wall polysaccharides, and more particularly of hairy regions of pectin. The protein is Probable arabinogalactan endo-beta-1,4-galactanase A (galA) of Aspergillus fumigatus (strain ATCC MYA-4609 / CBS 101355 / FGSC A1100 / Af293) (Neosartorya fumigata).